The sequence spans 790 residues: MRMLRWLILSAFSVAGAVQAQGNQDSAAASASSASIGAPVLRTSPGLRVHRLPDEKIPAFMEADQISGDPDSEVTLTGNAQVRRVDGIIKGDRINYRRDTGDVDVQGSARMLRDGTLITGPSARLNVDTYSGEIQEPNFWIGASGGTAQARHADIFSKSQMRLSQVTYSGCPCPKPSWYIKADTVDLDFDENEGVARNGVLYFKDVPILASPYLTFPVKKERKSGFLMPTYGTTSNSGFDISLPYYFNLAPNYDLTLVPRYLSKRGAQLGGEFRYLGSGYRGVAIGTYLPDDNETGRDRWMYRTYHRQLLGNGFYTDWDIAGASDDNYFRDISELGLNTASTTYLPRRGRVGWSSTYWQTYAQVYKYQTLQDPDAPLAPPYDKVPELWLKGARYDWGGFDAEWVSTAVRFQRPLLNGRRLGPDGDRLQTYPTVSYPIVRPGWFLVPKVGVHYTQYRTDWYNRDWNRIGLSNYKRTESRTVPIMSLDAGMIFERDASLFGKAATQTLEPRLYYLRVPYRDQSALPVYDTTLADFSFDQAFQENIYTGGWDRIANANQLTAALTTRWLDANTGFERLSLSAAQRIYFQDQEVTLPAEQPRKNVRSDFLVGATAALTDTLTTDVAAQYNPYDNKWSRGMVSARWSPQRLTTVAVAYRYQRDPLPGISYQPQGQNQVSLAVQWPIHRRWYGVGRVDYSLRSEPATAAAAEQSPRVTQAIAGLEYKGDCCWVGRVVYQRYAVSAADTNTALFFQLELTGLGALGTDPISLLNRSIPGYQSVVPPTPTGTTFERYE.

A signal peptide spans methionine 1–alanine 20.

It belongs to the LptD family. In terms of assembly, component of the lipopolysaccharide transport and assembly complex. Interacts with LptE and LptA.

The protein resides in the cell outer membrane. Functionally, together with LptE, is involved in the assembly of lipopolysaccharide (LPS) at the surface of the outer membrane. This chain is LPS-assembly protein LptD, found in Bordetella parapertussis (strain 12822 / ATCC BAA-587 / NCTC 13253).